We begin with the raw amino-acid sequence, 196 residues long: HTH-type transcriptional regulator BetI (196 aa).

The HTH tetR-type domain occupies 8–68; that stretch reads PVRREQLIRA…AAMRQILREL (61 aa). The H-T-H motif DNA-binding region spans 31-50; sequence TVATIAKKAGLSSGIVAHYF.

It functions in the pathway amine and polyamine biosynthesis; betaine biosynthesis via choline pathway [regulation]. In terms of biological role, repressor involved in the biosynthesis of the osmoprotectant glycine betaine. It represses transcription of the choline transporter BetT and the genes of BetAB involved in the synthesis of glycine betaine. The sequence is that of HTH-type transcriptional regulator BetI from Stenotrophomonas maltophilia (strain R551-3).